Here is a 459-residue protein sequence, read N- to C-terminus: Alcohol acyl transferase 1 allele RGc (459 aa).

Active-site proton acceptor residues include His-164 and Asn-385.

This sequence belongs to the plant acyltransferase family. Expressed at very low levels in the skin of ripe fruit.

Functionally, involved in the biosynthesis of volatile esters which confer ripe apple fruit flavor. Alcohol acyl transferase that can use a wide range of alcohols as substrate to produce esters. The polypeptide is Alcohol acyl transferase 1 allele RGc (Malus domestica (Apple)).